Here is a 392-residue protein sequence, read N- to C-terminus: Pyoverdine export membrane fusion protein PvdR (392 aa).

The segment at residues 1 to 36 (MRRSTHTRRRLLLGGLGLLGLGSLLAWTSLPFGAQP) is a signal peptide (tat-type signal). Residues 109 to 181 (IDNLKAQLAE…NASLRSDEAE (73 aa)) adopt a coiled-coil conformation. The segment at 267-286 (PPKPLDQTSQGGGSPASATA) is disordered.

Belongs to the membrane fusion protein (MFP) (TC 8.A.1) family. In terms of assembly, part of the tripartite efflux system PvdRT-OpmQ, which is composed of an inner membrane component with both ATPase and permease domains, PvdT, a periplasmic membrane fusion protein, PvdR, and an outer membrane component, OpmQ. Post-translationally, predicted to be exported by the Tat system. The position of the signal peptide cleavage has not been experimentally proven.

Its subcellular location is the periplasm. Part of the tripartite efflux system PvdRT-OpmQ required for the secretion into the extracellular milieu of the siderophore pyoverdine (PVD), which is involved in iron acquisition. This subunit is an adapter protein that stimulates the ATPase activity of PvdT and connects the inner and outer membrane components. The system is responsible for export of newly synthesized PVD after the final steps of biosynthesis have taken place in the periplasm. It is also responsible for recycling of PVD after internalization of ferri-PVD into the periplasm by the outer-membrane receptor FpvA and release of iron from PVD, thus making PVD available for new cycles of iron uptake. Contributes to resistance against ampicillin. The sequence is that of Pyoverdine export membrane fusion protein PvdR from Pseudomonas putida (strain ATCC 47054 / DSM 6125 / CFBP 8728 / NCIMB 11950 / KT2440).